Consider the following 343-residue polypeptide: Vancomycin/teicoplanin A-type resistance protein VanA (343 aa).

ATP-binding positions include Lys-133, 169 to 171 (FVK), 177 to 178 (SS), 207 to 214 (EQAVSGCE), and Phe-241. Positions 137-338 (YIVAKNAGIA…LPELIDRLIV (202 aa)) constitute an ATP-grasp domain. His-244 provides a ligand contact to substrate. 304–305 (NE) contributes to the ATP binding site. Positions 305 and 307 each coordinate Mg(2+).

It belongs to the D-alanine--D-alanine ligase family. It depends on Mg(2+) as a cofactor. The cofactor is Mn(2+).

The protein localises to the cell membrane. The enzyme catalyses (R)-lactate + D-alanine + ATP = D-alanyl-(R)-lactate + ADP + phosphate. Its function is as follows. Required for high-level resistance to glycopeptide antibiotics. D-Ala--D-Ala ligase of altered specificity which catalyzes ester bond formation between D-Ala and various D-hydroxy acids; produces a peptidoglycan which does not terminate in D-alanine but in D-lactate, thus preventing vancomycin or teicoplanin binding. The chain is Vancomycin/teicoplanin A-type resistance protein VanA (vanA) from Enterococcus faecium (Streptococcus faecium).